Consider the following 520-residue polypeptide: Keratin, type II cytoskeletal 8 (520 aa).

The span at 1–19 (MSTYSKKTSYTVKSSSSGS) shows a compositional bias: low complexity. The disordered stretch occupies residues 1–20 (MSTYSKKTSYTVKSSSSGSI). The segment at 2-114 (STYSKKTSYT…DPNIQIVRTQ (113 aa)) is head. A Phosphoserine modification is found at S28. The segment at 115–150 (EKEQIKTLNNRFASFIDKVRFLEQQNKMLETKWSLL) is coil 1A. Residues 115-426 (EKEQIKTLNN…KLLEGEEDRL (312 aa)) enclose the IF rod domain. Residues 151-166 (QNQTATRSNIDAMFEA) are linker 1. A coil 1B region spans residues 168 to 259 (IANLRRQLDS…QIFEEEIREL (92 aa)). The segment at 260-283 (QSQIKDTSVVVEMDNSRNLDMDAI) is linker 12. The segment at 284–422 (VAEVRAQYED…ATYRKLLEGE (139 aa)) is coil 2. A tail region spans residues 423–520 (EDRLATGIKA…VSESSEVVQD (98 aa)).

The protein belongs to the intermediate filament family. Heterotetramer of two type I and two type II keratins. Keratin-8 associates with keratin-18. Expressed in simple epithelia.

The protein resides in the cytoplasm. Its subcellular location is the nucleus. It is found in the nucleoplasm. The protein localises to the nucleus matrix. Its function is as follows. Together with KRT19, helps to link the contractile apparatus to dystrophin at the costameres of striated muscle. This is Keratin, type II cytoskeletal 8 from Danio rerio (Zebrafish).